The chain runs to 109 residues: Putative double-stranded DNA mimic protein plu2488 (109 aa).

This sequence belongs to the putative dsDNA mimic protein family.

Its function is as follows. May act as a double-stranded DNA (dsDNA) mimic. Probably regulates the activity of a dsDNA-binding protein. This is Putative double-stranded DNA mimic protein plu2488 from Photorhabdus laumondii subsp. laumondii (strain DSM 15139 / CIP 105565 / TT01) (Photorhabdus luminescens subsp. laumondii).